A 297-amino-acid chain; its full sequence is 4-hydroxy-tetrahydrodipicolinate synthase (297 aa).

A pyruvate-binding site is contributed by threonine 46. The Proton donor/acceptor role is filled by tyrosine 136. Lysine 165 functions as the Schiff-base intermediate with substrate in the catalytic mechanism. Threonine 206 is a binding site for pyruvate.

Belongs to the DapA family. In terms of assembly, homotetramer; dimer of dimers.

It is found in the cytoplasm. The catalysed reaction is L-aspartate 4-semialdehyde + pyruvate = (2S,4S)-4-hydroxy-2,3,4,5-tetrahydrodipicolinate + H2O + H(+). It participates in amino-acid biosynthesis; L-lysine biosynthesis via DAP pathway; (S)-tetrahydrodipicolinate from L-aspartate: step 3/4. In terms of biological role, catalyzes the condensation of (S)-aspartate-beta-semialdehyde [(S)-ASA] and pyruvate to 4-hydroxy-tetrahydrodipicolinate (HTPA). In Sulfurimonas denitrificans (strain ATCC 33889 / DSM 1251) (Thiomicrospira denitrificans (strain ATCC 33889 / DSM 1251)), this protein is 4-hydroxy-tetrahydrodipicolinate synthase.